A 145-amino-acid polypeptide reads, in one-letter code: Large ribosomal subunit protein uL11 (145 aa).

The protein belongs to the universal ribosomal protein uL11 family. As to quaternary structure, part of the ribosomal stalk of the 50S ribosomal subunit. Interacts with L10 and the large rRNA to form the base of the stalk. L10 forms an elongated spine to which L12 dimers bind in a sequential fashion forming a multimeric L10(L12)X complex. In terms of processing, one or more lysine residues are methylated.

Functionally, forms part of the ribosomal stalk which helps the ribosome interact with GTP-bound translation factors. The sequence is that of Large ribosomal subunit protein uL11 from Porphyromonas gingivalis (strain ATCC 33277 / DSM 20709 / CIP 103683 / JCM 12257 / NCTC 11834 / 2561).